A 364-amino-acid polypeptide reads, in one-letter code: Heme A synthase (364 aa).

A run of 8 helical transmembrane segments spans residues 25–45 (ALRLWLGLVILALFALVLVGG), 111–131 (FLARSIGVIFALPLVFFWATG), 139–159 (WPLVGILALGGFQGFIGWWMV), 174–194 (LATHLVTACLIFSACVWVMRG), 212–232 (AIALLCLVLFQIYLGALVAGL), 270–290 (VQFVHRIGAYTVLLVALYHMV), 305–325 (SVVLFAIVCCQAVLGISALLL), and 327–347 (VPLDAALAHQGGALILLGFTV). A heme-binding site is contributed by His-274. Residue His-335 participates in heme binding.

The protein belongs to the COX15/CtaA family. Type 2 subfamily. As to quaternary structure, interacts with CtaB. Heme b serves as cofactor.

It localises to the cell membrane. The enzyme catalyses Fe(II)-heme o + 2 A + H2O = Fe(II)-heme a + 2 AH2. It functions in the pathway porphyrin-containing compound metabolism; heme A biosynthesis; heme A from heme O: step 1/1. In terms of biological role, catalyzes the conversion of heme O to heme A by two successive hydroxylations of the methyl group at C8. The first hydroxylation forms heme I, the second hydroxylation results in an unstable dihydroxymethyl group, which spontaneously dehydrates, resulting in the formyl group of heme A. The sequence is that of Heme A synthase from Allorhizobium ampelinum (strain ATCC BAA-846 / DSM 112012 / S4) (Agrobacterium vitis (strain S4)).